The following is a 270-amino-acid chain: 3-phenylpropionate-dihydrodiol/cinnamic acid-dihydrodiol dehydrogenase (270 aa).

Position 10–34 (10–34 (FITGGGSGLGLALVERFIEEGAQVA)) interacts with NAD(+). Ser143 is a binding site for substrate. The Proton acceptor role is filled by Tyr156.

It belongs to the short-chain dehydrogenases/reductases (SDR) family.

It catalyses the reaction 3-(cis-5,6-dihydroxycyclohexa-1,3-dien-1-yl)propanoate + NAD(+) = 3-(2,3-dihydroxyphenyl)propanoate + NADH + H(+). The catalysed reaction is (2E)-3-(cis-5,6-dihydroxycyclohexa-1,3-dien-1-yl)prop-2-enoate + NAD(+) = (2E)-3-(2,3-dihydroxyphenyl)prop-2-enoate + NADH + H(+). It participates in aromatic compound metabolism; 3-phenylpropanoate degradation. Functionally, converts 3-phenylpropionate-dihydrodiol (PP-dihydrodiol) and cinnamic acid-dihydrodiol (CI-dihydrodiol) into 3-(2,3-dihydroxylphenyl)propanoic acid (DHPP) and 2,3-dihydroxicinnamic acid (DHCI), respectively. This chain is 3-phenylpropionate-dihydrodiol/cinnamic acid-dihydrodiol dehydrogenase, found in Escherichia coli (strain ATCC 8739 / DSM 1576 / NBRC 3972 / NCIMB 8545 / WDCM 00012 / Crooks).